The primary structure comprises 991 residues: Antigenic heat-stable 120 kDa protein (991 aa).

Disordered stretches follow at residues 1–37 (DTSE…TPAL), 54–73 (TPSM…TSDP), and 348–384 (GQSK…TNQP). Residues 12 to 29 (EYTEEQKQTEEQEQKEFL) are compositionally biased toward basic and acidic residues. Residues 348 to 373 (GQSKEQPLITPQQTTSSSVEPPQYKQ) show a composition bias toward polar residues.

It localises to the cytoplasm. This is Antigenic heat-stable 120 kDa protein (sca4) from Rickettsia sibirica.